The sequence spans 549 residues: Cation/acetate symporter ActP (549 aa).

Helical transmembrane passes span 33-53, 77-97, 103-123, 148-168, 183-203, 206-226, 262-282, 303-323, 355-375, 404-424, 428-448, 464-484, and 493-513; these read WQAI…TYWA, LAIA…ALVF, GLIY…LIAE, ILSA…QMVG, IAVV…GMLA, WVQI…AFMV, ISAL…PHIL, GFMG…IMLV, LFLG…VAGL, VSKI…ILFE, IAFM…PIIL, GGWL…TIWV, and IFPY…GIWF.

Belongs to the sodium:solute symporter (SSF) (TC 2.A.21) family.

The protein localises to the cell inner membrane. Transports acetate. The polypeptide is Cation/acetate symporter ActP (Salmonella newport (strain SL254)).